A 965-amino-acid polypeptide reads, in one-letter code: Pullulanase 1, chloroplastic (965 aa).

Residues 1–62 constitute a chloroplast transit peptide; that stretch reads MALTLTPTSS…SKTSLHCLCS (62 aa). D552 functions as the Nucleophile in the catalytic mechanism. E589 (proton donor) is an active-site residue.

The protein belongs to the glycosyl hydrolase 13 family.

It is found in the plastid. The protein localises to the chloroplast stroma. It catalyses the reaction Hydrolysis of (1-&gt;6)-alpha-D-glucosidic linkages in alpha- and beta-limit dextrins of amylopectin and glycogen, and in amylopectin and pullulan.. It functions in the pathway glycan biosynthesis; starch biosynthesis. The protein operates within glycan degradation; starch degradation. Its function is as follows. Involved in starch degradation and also probably in the trimming of pre-amylopectin chains during starch synthesis. This is Pullulanase 1, chloroplastic (PU1) from Arabidopsis thaliana (Mouse-ear cress).